The following is a 90-amino-acid chain: Small ribosomal subunit protein bS16 (90 aa).

It belongs to the bacterial ribosomal protein bS16 family.

The chain is Small ribosomal subunit protein bS16 from Bacillus cytotoxicus (strain DSM 22905 / CIP 110041 / 391-98 / NVH 391-98).